The sequence spans 85 residues: Small ribosomal subunit protein bS16c (85 aa).

Belongs to the bacterial ribosomal protein bS16 family.

It is found in the plastid. Its subcellular location is the chloroplast. In Cucumis sativus (Cucumber), this protein is Small ribosomal subunit protein bS16c.